The primary structure comprises 81 residues: Xenopsin peptides (81 aa).

The first 20 residues, 1–20 (MYKGIFLCVLLAVICANSLA), serve as a signal peptide directing secretion. Positions 21-37 (TPSSDADEDNDEVERYV) are excised as a propeptide. A propeptide spans 65-73 (EAMLRSAEA) (removed in mature form by a dipeptidylpeptidase).

This sequence belongs to the gastrin/cholecystokinin family. Magainin subfamily. XPF is synthesized in the stomach and stored in a novel granular multinucleated cell in the gastric mucosa, it is stored as active, processed peptides in large granules within the granular gland secretions of the skin.

It is found in the secreted. Its function is as follows. Xenopsin is a neurotensin-like octapeptide. Functionally, XPF has antimicrobial activity. The sequence is that of Xenopsin peptides from Xenopus laevis (African clawed frog).